Reading from the N-terminus, the 360-residue chain is Peptide chain release factor 1 (360 aa).

Glutamine 237 is modified (N5-methylglutamine).

The protein belongs to the prokaryotic/mitochondrial release factor family. Methylated by PrmC. Methylation increases the termination efficiency of RF1.

It is found in the cytoplasm. In terms of biological role, peptide chain release factor 1 directs the termination of translation in response to the peptide chain termination codons UAG and UAA. The protein is Peptide chain release factor 1 of Pseudomonas aeruginosa (strain LESB58).